Reading from the N-terminus, the 284-residue chain is MHVVSTKQMLNNAQRGGYAVPAFNIHNLETMQVVVETAANLHAPVIIAGTPGTFTHAGTENLLALVSAMAKQYHHPLAIHLDHHTKFDDIAQKVRSGVRSVMIDASHLPFAQNISRVKEVVDFCHRFDVSVEAELGQLGGQEDDVQVNEADAFYTNPAQAREFAEATGIDSLAVAIGTAHGMYASAPALDFSRLENIRQWVNLPLVLHGASGLSTKDIQQTIKLGICKINVATELKNAFSQALKNYLTEHPEATEPRDYLQSAKSAMRDVVSKVIADCGCEGRA.

Residue D82 is the Proton donor of the active site. H83 and H180 together coordinate Zn(2+). A dihydroxyacetone phosphate-binding site is contributed by G181. H208 contacts Zn(2+). Dihydroxyacetone phosphate is bound by residues 209 to 211 (GAS) and 230 to 233 (NVAT).

Belongs to the class II fructose-bisphosphate aldolase family. TagBP aldolase GatY subfamily. As to quaternary structure, forms a complex with GatZ. Zn(2+) serves as cofactor.

The enzyme catalyses D-tagatofuranose 1,6-bisphosphate = D-glyceraldehyde 3-phosphate + dihydroxyacetone phosphate. It participates in carbohydrate metabolism; D-tagatose 6-phosphate degradation; D-glyceraldehyde 3-phosphate and glycerone phosphate from D-tagatose 6-phosphate: step 2/2. Functionally, catalytic subunit of the tagatose-1,6-bisphosphate aldolase GatYZ, which catalyzes the reversible aldol condensation of dihydroxyacetone phosphate (DHAP or glycerone-phosphate) with glyceraldehyde 3-phosphate (G3P) to produce tagatose 1,6-bisphosphate (TBP). Requires GatZ subunit for full activity and stability. Is involved in the catabolism of galactitol. The chain is D-tagatose-1,6-bisphosphate aldolase subunit GatY from Shigella boydii serotype 4 (strain Sb227).